A 148-amino-acid chain; its full sequence is D-aminoacyl-tRNA deacylase (148 aa).

The short motif at 137-138 (GP) is the Gly-cisPro motif, important for rejection of L-amino acids element.

The protein belongs to the DTD family. In terms of assembly, homodimer.

It localises to the cytoplasm. It catalyses the reaction glycyl-tRNA(Ala) + H2O = tRNA(Ala) + glycine + H(+). It carries out the reaction a D-aminoacyl-tRNA + H2O = a tRNA + a D-alpha-amino acid + H(+). Its function is as follows. An aminoacyl-tRNA editing enzyme that deacylates mischarged D-aminoacyl-tRNAs. Also deacylates mischarged glycyl-tRNA(Ala), protecting cells against glycine mischarging by AlaRS. Acts via tRNA-based rather than protein-based catalysis; rejects L-amino acids rather than detecting D-amino acids in the active site. By recycling D-aminoacyl-tRNA to D-amino acids and free tRNA molecules, this enzyme counteracts the toxicity associated with the formation of D-aminoacyl-tRNA entities in vivo and helps enforce protein L-homochirality. In Ligilactobacillus salivarius (strain UCC118) (Lactobacillus salivarius), this protein is D-aminoacyl-tRNA deacylase.